We begin with the raw amino-acid sequence, 297 residues long: Virulence genes transcriptional activator SpvR (297 aa).

Positions 1–61 (MDFLINKKLK…IRKNGTLIPT (61 aa)) constitute an HTH lysR-type domain. A DNA-binding region (H-T-H motif) is located at residues 21–40 (FSIATSVLYITRTPLSRVIS).

This sequence belongs to the LysR transcriptional regulatory family.

The protein resides in the cytoplasm. Functionally, positive regulator for the plasmid-encoded virulence factors SpvA, SpvB, and SpvC. This chain is Virulence genes transcriptional activator SpvR (spvR), found in Salmonella dublin.